The primary structure comprises 484 residues: Synaptic vesicle membrane protein VAT-1 homolog (484 aa).

Low complexity-rich tracts occupy residues 1-13 and 40-61; these read MSGE…QQNA and SAST…PAAE. 2 disordered regions span residues 1-65 and 402-484; these read MSGE…KAPE and IGKI…KEEN. A compositionally biased stretch (basic and acidic residues) spans 411–484; sequence PMKEEEKKEE…KKEEVKKEEN (74 aa).

This sequence belongs to the zinc-containing alcohol dehydrogenase family. Quinone oxidoreductase subfamily.

This is Synaptic vesicle membrane protein VAT-1 homolog from Danio rerio (Zebrafish).